The sequence spans 354 residues: NADH-quinone oxidoreductase subunit H 2 (354 aa).

The next 8 helical transmembrane spans lie at 4–24, 81–101, 130–150, 170–190, 201–221, 269–289, 296–316, and 333–353; these read IALFLLVALIKVVLVIFVLLT, ILAPMLAVAMALLSISIVPFG, IGLLIILGVTSIGVYGIALAG, VSYEVSLGLSLVGVLLLSGSF, GGFWNWNIFGGFQFIAFFIYL, VACIASILFLGGWSGPVPGFL, LVPVFWFCLRIFAFLFIYIWV, and WKFLLPLSIANIMVTALFVAL.

Belongs to the complex I subunit 1 family. As to quaternary structure, NDH-1 is composed of 14 different subunits. Subunits NuoA, H, J, K, L, M, N constitute the membrane sector of the complex.

It localises to the cell inner membrane. It carries out the reaction a quinone + NADH + 5 H(+)(in) = a quinol + NAD(+) + 4 H(+)(out). In terms of biological role, NDH-1 shuttles electrons from NADH, via FMN and iron-sulfur (Fe-S) centers, to quinones in the respiratory chain. The immediate electron acceptor for the enzyme in this species is believed to be ubiquinone. Couples the redox reaction to proton translocation (for every two electrons transferred, four hydrogen ions are translocated across the cytoplasmic membrane), and thus conserves the redox energy in a proton gradient. This subunit may bind ubiquinone. In Koribacter versatilis (strain Ellin345), this protein is NADH-quinone oxidoreductase subunit H 2.